The chain runs to 235 residues: Sugar fermentation stimulation protein homolog (235 aa).

This sequence belongs to the SfsA family.

In Alkaliphilus oremlandii (strain OhILAs) (Clostridium oremlandii (strain OhILAs)), this protein is Sugar fermentation stimulation protein homolog.